Consider the following 361-residue polypeptide: Adenosine kinase (361 aa).

Residues 7 to 15 (PKPKKLKVE) carry the Nuclear localization signal motif. Residue aspartate 34 participates in adenosine binding. A Mg(2+)-binding site is contributed by serine 48. Tyrosine 76 carries the post-translational modification Phosphotyrosine. Mg(2+) is bound at residue asparagine 147. Residue glutamine 305 coordinates adenosine. Residue aspartate 316 is part of the active site. Aspartate 316 functions as the Proton acceptor in the catalytic mechanism.

It belongs to the carbohydrate kinase PfkB family. In terms of assembly, monomer. Requires Mg(2+) as cofactor. As to expression, widely expressed. Highly expressed in liver, testis, kidney and spleen (at protein level). In brain, expression in most forebrain structures and the cerebellum is higher than in the midbrain and brainstem (at protein level). In terms of tissue distribution, major isoform in testis and kidney. Not detected in most brain regions, except in the cerebellum, where it is expressed at a similar level to that of isoform 2 (at protein level). Major isoform in spleen and in most brain regions, except in the cerebellum, where it is expressed at a similar level to that of isoform 1 (at protein level).

It is found in the nucleus. Its subcellular location is the cytoplasm. The catalysed reaction is adenosine + ATP = AMP + ADP + H(+). It participates in purine metabolism; AMP biosynthesis via salvage pathway; AMP from adenosine: step 1/1. Its activity is regulated as follows. Activity is inhibited by 5-iodotubercidin and 5'-amino-5'-deoxyadenosine. Its function is as follows. Catalyzes the phosphorylation of the purine nucleoside adenosine at the 5' position in an ATP-dependent manner. Serves as a potential regulator of concentrations of extracellular adenosine and intracellular adenine nucleotides. This chain is Adenosine kinase (Adk), found in Mus musculus (Mouse).